The chain runs to 219 residues: 2-phospho-L-lactate guanylyltransferase (219 aa).

It belongs to the CofC family. As to quaternary structure, homodimer.

The enzyme catalyses (2S)-2-phospholactate + GTP + H(+) = (2S)-lactyl-2-diphospho-5'-guanosine + diphosphate. It functions in the pathway cofactor biosynthesis; coenzyme F420 biosynthesis. Functionally, guanylyltransferase that catalyzes the activation of (2S)-2-phospholactate (2-PL) as (2S)-lactyl-2-diphospho-5'-guanosine, via the condensation of 2-PL with GTP. It is involved in the biosynthesis of coenzyme F420, a hydride carrier cofactor. This chain is 2-phospho-L-lactate guanylyltransferase, found in Methanocaldococcus vulcanius (strain ATCC 700851 / DSM 12094 / M7) (Methanococcus vulcanius).